Reading from the N-terminus, the 179-residue chain is Cell division protein SepF (179 aa).

Residues 19–55 (DSSLPYEKRDEPVFTSVNSSQEPALPMNQPSQSAGAK) form a disordered region. Residues 33–55 (TSVNSSQEPALPMNQPSQSAGAK) show a composition bias toward polar residues.

This sequence belongs to the SepF family. As to quaternary structure, homodimer. Interacts with FtsZ.

The protein localises to the cytoplasm. In terms of biological role, cell division protein that is part of the divisome complex and is recruited early to the Z-ring. Probably stimulates Z-ring formation, perhaps through the cross-linking of FtsZ protofilaments. Its function overlaps with FtsA. In Streptococcus pneumoniae (strain JJA), this protein is Cell division protein SepF.